A 1647-amino-acid polypeptide reads, in one-letter code: Nucleoporin nup186 (1647 aa).

This sequence belongs to the NUP186/NUP192/NUP205 family.

The protein localises to the cytoplasm. It localises to the nucleus. Functions as a component of the nuclear pore complex (NPC). NPC components, collectively referred to as nucleoporins (NUPs), can play the role of both NPC structural components and of docking or interaction partners for transiently associated nuclear transport factors. Active directional transport is assured by both, a Phe-Gly (FG) repeat affinity gradient for these transport factors across the NPC and a transport cofactor concentration gradient across the nuclear envelope. This Schizosaccharomyces pombe (strain 972 / ATCC 24843) (Fission yeast) protein is Nucleoporin nup186 (nup186).